Here is a 296-residue protein sequence, read N- to C-terminus: Nucleotide-binding protein SMU_1306c (296 aa).

13–20 (GMSGAGKT) serves as a coordination point for ATP. Position 63 to 66 (63 to 66 (DMRS)) interacts with GTP.

Belongs to the RapZ-like family.

Functionally, displays ATPase and GTPase activities. The polypeptide is Nucleotide-binding protein SMU_1306c (Streptococcus mutans serotype c (strain ATCC 700610 / UA159)).